The primary structure comprises 244 residues: GTP cyclohydrolase 1 type 2 homolog (244 aa).

A divalent metal cation contacts are provided by H65, H66, D102, H216, and E220.

The protein belongs to the GTP cyclohydrolase I type 2/NIF3 family. Homohexamer; trimer of dimers, that forms a hollow cage-like architecture.

Functionally, DNA-binding protein exhibiting the ability to bind to both single-stranded and double-stranded DNA. In Methanocaldococcus jannaschii (strain ATCC 43067 / DSM 2661 / JAL-1 / JCM 10045 / NBRC 100440) (Methanococcus jannaschii), this protein is GTP cyclohydrolase 1 type 2 homolog.